The sequence spans 159 residues: 2-C-methyl-D-erythritol 2,4-cyclodiphosphate synthase (159 aa).

2 residues coordinate a divalent metal cation: D10 and H12. 4-CDP-2-C-methyl-D-erythritol 2-phosphate contacts are provided by residues 10–12 (DVH) and 36–37 (HS). H44 contributes to the a divalent metal cation binding site. Residues 58–60 (DIG), 134–137 (TTTE), F141, and R144 contribute to the 4-CDP-2-C-methyl-D-erythritol 2-phosphate site.

The protein belongs to the IspF family. In terms of assembly, homotrimer. A divalent metal cation is required as a cofactor.

It catalyses the reaction 4-CDP-2-C-methyl-D-erythritol 2-phosphate = 2-C-methyl-D-erythritol 2,4-cyclic diphosphate + CMP. Its pathway is isoprenoid biosynthesis; isopentenyl diphosphate biosynthesis via DXP pathway; isopentenyl diphosphate from 1-deoxy-D-xylulose 5-phosphate: step 4/6. Functionally, involved in the biosynthesis of isopentenyl diphosphate (IPP) and dimethylallyl diphosphate (DMAPP), two major building blocks of isoprenoid compounds. Catalyzes the conversion of 4-diphosphocytidyl-2-C-methyl-D-erythritol 2-phosphate (CDP-ME2P) to 2-C-methyl-D-erythritol 2,4-cyclodiphosphate (ME-CPP) with a corresponding release of cytidine 5-monophosphate (CMP). This Bacteroides fragilis (strain YCH46) protein is 2-C-methyl-D-erythritol 2,4-cyclodiphosphate synthase.